Here is a 273-residue protein sequence, read N- to C-terminus: Large ribosomal subunit protein uL2 (273 aa).

2 disordered regions span residues 28–55 (TPEK…RHRG) and 222–273 (GMAM…SKRK). Residues 255-273 (YKTRKKRRVSDRFIVSKRK) show a composition bias toward basic residues.

It belongs to the universal ribosomal protein uL2 family. As to quaternary structure, part of the 50S ribosomal subunit. Forms a bridge to the 30S subunit in the 70S ribosome.

Functionally, one of the primary rRNA binding proteins. Required for association of the 30S and 50S subunits to form the 70S ribosome, for tRNA binding and peptide bond formation. It has been suggested to have peptidyltransferase activity; this is somewhat controversial. Makes several contacts with the 16S rRNA in the 70S ribosome. This Treponema pallidum (strain Nichols) protein is Large ribosomal subunit protein uL2.